Consider the following 343-residue polypeptide: Ribosomal RNA small subunit methyltransferase C (343 aa).

The protein belongs to the methyltransferase superfamily. RsmC family. As to quaternary structure, monomer.

It is found in the cytoplasm. It carries out the reaction guanosine(1207) in 16S rRNA + S-adenosyl-L-methionine = N(2)-methylguanosine(1207) in 16S rRNA + S-adenosyl-L-homocysteine + H(+). Specifically methylates the guanine in position 1207 of 16S rRNA in the 30S particle. The sequence is that of Ribosomal RNA small subunit methyltransferase C from Escherichia coli O8 (strain IAI1).